Reading from the N-terminus, the 691-residue chain is MSVKREYPLKMYRNIGIMAHIDAGKTTTTERILFYTGKTHKIGETHDGAATMDWMVQEQERGITITSAATTCIWKDHVINVIDTPGHVDFTVEVERSLRVLDGAVTVLTAKGGVEPQTETVWRQADKYKVPRMAYVNKMDIMGADFFRVVNMMRERLHANAVPIQIPIGAEDTFKGYVDLIRNEAIIYEDDLGTVMDTEEIPEDMKDIAEEYRGAMIEAIVELDEELMMKYLEGEEISVEELDLALRKGVLANKIVPVMCGSSYKNKGVQPMIDAIVKYLPSPLDIPPVKGTHPETGEEVERKASDDEPMSTLAFKIATDPFIGKLAFVRVYSGVMKNGTYVLNPVKGKRERIGRLVKMHANHREEVEELHAGDLGAVVGLKDTITGDTLCDEKEPVILEKMEFPEPVISIAIEPKTKAGQEKMGLSLAKLAEEDPTFRTFTNQETGQTIIEGMGELHLEVIVDRLQREFKVECNVGKPQVAYKETIKKAVKAEGKFVRQSGGRGQYGHCWIEMTPHEGEYEFQNAIVGGAIPKEYIPAIDHGIEEASDSGVIAGYPVINFKVKLYDGSYHDVDSSEMAFKIAGSMAFKNAMSKADPVLLEPVMKVEVVVPEEYMGDVMGDINSRRGRIDGMEATAGAQNIRAFVPLSQMFGYATVLRSRTQGRGNYSMEFDHYEEVPKSIQEEIIGERMK.

Positions 10–284 constitute a tr-type G domain; that stretch reads KMYRNIGIMA…AIVKYLPSPL (275 aa). Residues 19–26, 83–87, and 137–140 each bind GTP; these read AHIDAGKT, DTPGH, and NKMD.

It belongs to the TRAFAC class translation factor GTPase superfamily. Classic translation factor GTPase family. EF-G/EF-2 subfamily.

The protein resides in the cytoplasm. Functionally, catalyzes the GTP-dependent ribosomal translocation step during translation elongation. During this step, the ribosome changes from the pre-translocational (PRE) to the post-translocational (POST) state as the newly formed A-site-bound peptidyl-tRNA and P-site-bound deacylated tRNA move to the P and E sites, respectively. Catalyzes the coordinated movement of the two tRNA molecules, the mRNA and conformational changes in the ribosome. This chain is Elongation factor G, found in Clostridium tetani (strain Massachusetts / E88).